Reading from the N-terminus, the 518-residue chain is Glutamate--cysteine ligase (518 aa).

Belongs to the glutamate--cysteine ligase type 1 family. Type 1 subfamily.

It carries out the reaction L-cysteine + L-glutamate + ATP = gamma-L-glutamyl-L-cysteine + ADP + phosphate + H(+). The protein operates within sulfur metabolism; glutathione biosynthesis; glutathione from L-cysteine and L-glutamate: step 1/2. The polypeptide is Glutamate--cysteine ligase (Cronobacter sakazakii (strain ATCC BAA-894) (Enterobacter sakazakii)).